The primary structure comprises 226 residues: Phosphoribosylformylglycinamidine synthase subunit PurQ (226 aa).

One can recognise a Glutamine amidotransferase type-1 domain in the interval 2 to 226 (KFAVIQFPGS…LKNFLVTVKN (225 aa)). Catalysis depends on Cys-86, which acts as the Nucleophile. Active-site residues include His-195 and Glu-197.

In terms of assembly, part of the FGAM synthase complex composed of 1 PurL, 1 PurQ and 2 PurS subunits.

It is found in the cytoplasm. The enzyme catalyses N(2)-formyl-N(1)-(5-phospho-beta-D-ribosyl)glycinamide + L-glutamine + ATP + H2O = 2-formamido-N(1)-(5-O-phospho-beta-D-ribosyl)acetamidine + L-glutamate + ADP + phosphate + H(+). It carries out the reaction L-glutamine + H2O = L-glutamate + NH4(+). Its pathway is purine metabolism; IMP biosynthesis via de novo pathway; 5-amino-1-(5-phospho-D-ribosyl)imidazole from N(2)-formyl-N(1)-(5-phospho-D-ribosyl)glycinamide: step 1/2. Its function is as follows. Part of the phosphoribosylformylglycinamidine synthase complex involved in the purines biosynthetic pathway. Catalyzes the ATP-dependent conversion of formylglycinamide ribonucleotide (FGAR) and glutamine to yield formylglycinamidine ribonucleotide (FGAM) and glutamate. The FGAM synthase complex is composed of three subunits. PurQ produces an ammonia molecule by converting glutamine to glutamate. PurL transfers the ammonia molecule to FGAR to form FGAM in an ATP-dependent manner. PurS interacts with PurQ and PurL and is thought to assist in the transfer of the ammonia molecule from PurQ to PurL. This chain is Phosphoribosylformylglycinamidine synthase subunit PurQ, found in Lactococcus lactis subsp. cremoris (Streptococcus cremoris).